Here is a 474-residue protein sequence, read N- to C-terminus: Cryptochrome DASH (474 aa).

Residues Asp2–Leu136 enclose the Photolyase/cryptochrome alpha/beta domain. Over residues Glu161–Ser171 the composition is skewed to basic and acidic residues. A disordered region spans residues Glu161 to Asp202.

It belongs to the DNA photolyase class-1 family. It depends on FAD as a cofactor. The cofactor is (6R)-5,10-methylene-5,6,7,8-tetrahydrofolate.

In terms of biological role, may have a photoreceptor function. Binds DNA; probably functions as a transcriptional repressor. This is Cryptochrome DASH (cry) from Natronomonas pharaonis (strain ATCC 35678 / DSM 2160 / CIP 103997 / JCM 8858 / NBRC 14720 / NCIMB 2260 / Gabara) (Halobacterium pharaonis).